The chain runs to 358 residues: Alanine racemase (358 aa).

The Proton acceptor; specific for D-alanine role is filled by Lys35. Lys35 is subject to N6-(pyridoxal phosphate)lysine. Arg130 serves as a coordination point for substrate. Tyr255 acts as the Proton acceptor; specific for L-alanine in catalysis. Met303 contacts substrate.

The protein belongs to the alanine racemase family. Pyridoxal 5'-phosphate serves as cofactor.

It carries out the reaction L-alanine = D-alanine. It participates in amino-acid biosynthesis; D-alanine biosynthesis; D-alanine from L-alanine: step 1/1. In terms of biological role, catalyzes the interconversion of L-alanine and D-alanine. May also act on other amino acids. The protein is Alanine racemase (alr) of Shewanella baltica (strain OS155 / ATCC BAA-1091).